The chain runs to 534 residues: MLLVDVANASADVAAMSARLAKVARIAELLRTAGRQGDARLVRVVVSWLSGELTQRQIGVGWRSVRSVPDPAAQPSLTVEDVDARFGEIGSTSGKGSQARRAALLAELFAAATAVEQVFLRRLLTGELRQGALGGVMADAVGKAAGVPSAVVRRAAMLGGDLPAVAAAAVTDGESALAQFTLQVGRPVGPMLAQTATGVADALDRFGGTALFEAKLDGARVQIHRRGDAVSVFTRSLDDVTARLPEVVDATLALPVTELIADAEAIALRPDGRPHRFQITASRFGRRGGTPDAGTQRLSVFFFDLLHADGVDLLDLPTGERIATLDATVPREQRVDRLLTSDPEAAQAFLDATLAAGHEGVMAKSPTAPYEAGRRGAGWLKVKPVHTLDLVVLAVEWGSGRRTGKLSNIHLGARDPATGGFVMLGKTFKGMTDEMLAWQTERFLELADGAAPAATADHGAAPAATADHGAADGFTVTVRPEQVVEIAFDGIQTSSRYPGGMALRFARVLCYRDDKTAAEADTIDTVRALHERAN.

Glu-213 contacts ATP. Catalysis depends on Lys-215, which acts as the N6-AMP-lysine intermediate. Residues Arg-220, Arg-235, Glu-264, Phe-303, Arg-375, and Lys-381 each coordinate ATP.

Belongs to the ATP-dependent DNA ligase family. The cofactor is Mg(2+).

The enzyme catalyses ATP + (deoxyribonucleotide)n-3'-hydroxyl + 5'-phospho-(deoxyribonucleotide)m = (deoxyribonucleotide)n+m + AMP + diphosphate.. DNA ligase that seals nicks in double-stranded DNA during DNA replication, DNA recombination and DNA repair. The protein is Probable DNA ligase of Mycolicibacterium vanbaalenii (strain DSM 7251 / JCM 13017 / BCRC 16820 / KCTC 9966 / NRRL B-24157 / PYR-1) (Mycobacterium vanbaalenii).